We begin with the raw amino-acid sequence, 238 residues long: Probable xyloglucan-specific endo-beta-1,4-glucanase A (238 aa).

A signal peptide spans 1–18 (MKFSLSVALSLAAATAQA). Asn-106 and Asn-171 each carry an N-linked (GlcNAc...) asparagine glycan.

The protein belongs to the glycosyl hydrolase 12 (cellulase H) family.

The protein resides in the secreted. It catalyses the reaction xyloglucan + H2O = xyloglucan oligosaccharides.. Catalyzes endohydrolysis of 1,4-beta-D-glucosidic linkages in xyloglucan with retention of the beta-configuration of the glycosyl residues. Specific for xyloglucan and does not hydrolyze other cell wall components. The sequence is that of Probable xyloglucan-specific endo-beta-1,4-glucanase A (xgeA) from Neosartorya fischeri (strain ATCC 1020 / DSM 3700 / CBS 544.65 / FGSC A1164 / JCM 1740 / NRRL 181 / WB 181) (Aspergillus fischerianus).